We begin with the raw amino-acid sequence, 169 residues long: Transcription antitermination protein NusB (169 aa).

Belongs to the NusB family.

Its function is as follows. Involved in transcription antitermination. Required for transcription of ribosomal RNA (rRNA) genes. Binds specifically to the boxA antiterminator sequence of the ribosomal RNA (rrn) operons. The sequence is that of Transcription antitermination protein NusB from Rhodococcus opacus (strain B4).